Reading from the N-terminus, the 209-residue chain is Small ribosomal subunit protein uS3 (209 aa).

A KH type-2 domain is found at 38–107 (IRKVIKNKYA…RFIVNVEEIK (70 aa)).

The protein belongs to the universal ribosomal protein uS3 family. Part of the 30S ribosomal subunit. Forms a tight complex with proteins S10 and S14.

Functionally, binds the lower part of the 30S subunit head. Binds mRNA in the 70S ribosome, positioning it for translation. The sequence is that of Small ribosomal subunit protein uS3 from Thermosipho africanus (strain TCF52B).